The sequence spans 352 residues: tRNA uridine(34) hydroxylase (352 aa).

A Rhodanese domain is found at 144-238 (SDPDVILIDT…YLEEVPASDS (95 aa)). C198 serves as the catalytic Cysteine persulfide intermediate.

This sequence belongs to the TrhO family.

It carries out the reaction uridine(34) in tRNA + AH2 + O2 = 5-hydroxyuridine(34) in tRNA + A + H2O. Functionally, catalyzes oxygen-dependent 5-hydroxyuridine (ho5U) modification at position 34 in tRNAs. The protein is tRNA uridine(34) hydroxylase of Psychrobacter arcticus (strain DSM 17307 / VKM B-2377 / 273-4).